A 609-amino-acid polypeptide reads, in one-letter code: Proteasome-associated ATPase (609 aa).

The tract at residues 1–22 (MGESERSEAFNPPREAGMSSGD) is disordered. The stretch at 20–96 (SGDIAELEQL…LREEVDRLGQ (77 aa)) forms a coiled coil. 296–301 (GCGKTL) is an ATP binding site. The tract at residues 608–609 (YL) is docks into pockets in the proteasome alpha-ring.

This sequence belongs to the AAA ATPase family. Homohexamer. Assembles into a hexameric ring structure that caps the 20S proteasome core. Strongly interacts with the prokaryotic ubiquitin-like protein Pup through a hydrophobic interface; the interacting region of ARC lies in its N-terminal coiled-coil domain. There is one Pup binding site per ARC hexamer ring. Upon ATP-binding, the C-terminus of ARC interacts with the alpha-rings of the proteasome core, possibly by binding to the intersubunit pockets.

The protein operates within protein degradation; proteasomal Pup-dependent pathway. Functionally, ATPase which is responsible for recognizing, binding, unfolding and translocation of pupylated proteins into the bacterial 20S proteasome core particle. May be essential for opening the gate of the 20S proteasome via an interaction with its C-terminus, thereby allowing substrate entry and access to the site of proteolysis. Thus, the C-termini of the proteasomal ATPase may function like a 'key in a lock' to induce gate opening and therefore regulate proteolysis. The chain is Proteasome-associated ATPase from Mycobacterium leprae (strain Br4923).